A 425-amino-acid polypeptide reads, in one-letter code: Histone-binding protein RBBP7 (425 aa).

At alanine 2 the chain carries N-acetylalanine. Serine 3 carries the phosphoserine modification. Lysine 4 carries the post-translational modification N6-acetyllysine; alternate. Lysine 4 participates in a covalent cross-link: Glycyl lysine isopeptide (Lys-Gly) (interchain with G-Cter in SUMO2); alternate. Residue lysine 4 forms a Glycyl lysine isopeptide (Lys-Gly) (interchain with G-Cter in ubiquitin); alternate linkage. Threonine 10 is subject to Phosphothreonine. 7 WD repeats span residues glutamine 47–histidine 122, arginine 128–arginine 173, glycine 181–aspartate 217, valine 228–aspartate 269, valine 275–phenylalanine 312, glutamate 318–histidine 369, and isoleucine 376–methionine 403. At serine 95 the chain carries Phosphoserine. A Glycyl lysine isopeptide (Lys-Gly) (interchain with G-Cter in SUMO2) cross-link involves residue lysine 101. An N6-acetyllysine modification is found at lysine 119. A Glycyl lysine isopeptide (Lys-Gly) (interchain with G-Cter in SUMO2) cross-link involves residue lysine 155. N6-acetyllysine; alternate is present on lysine 159. Lysine 159 is covalently cross-linked (Glycyl lysine isopeptide (Lys-Gly) (interchain with G-Cter in SUMO2); alternate). Residue serine 354 is modified to Phosphoserine.

The protein belongs to the WD repeat RBAP46/RBAP48/MSI1 family. In terms of assembly, binds directly to helix 1 of the histone fold of histone H4, a region that is not accessible when H4 is in chromatin. Subunit of the type B histone acetyltransferase (HAT) complex, composed of RBBP7 and HAT1. Subunit of the core histone deacetylase (HDAC) complex, which is composed of HDAC1, HDAC2, RBBP4 and RBBP7. The core HDAC complex associates with SIN3A, ARID4B/SAP180, SAP18, SAP30, SAP130, SUDS3/SAP45 and possibly ARID4A/RBP1 and ING1 to form the SIN3 HDAC complex. Component of the nucleosome remodeling and deacetylase (NuRD) repressor complex, composed of core proteins MTA1, MTA2, MTA3, RBBP4, RBBP7, HDAC1, HDAC2, MBD2, MBD3, and peripherally associated proteins CDK2AP1, CDK2AP2, GATAD2A, GATAD2B, CHD3, CHD4 and CHD5. The exact stoichiometry of the NuRD complex is unknown, and some subunits such as MBD2 and MBD3, GATAD2A and GATAD2B, and CHD3, CHD4 and CHD5 define mutually exclusive NuRD complexes. The NuRD complex may interact with MBD3L1. The NuRD complex may interact with MBD3L2. Subunit of the PRC2/EED-EZH2 complex, which is composed of at least EED, EZH2, RBBP4, RBBP7 and SUZ12. The PRC2/EED-EZH2 complex may also associate with HDAC1. Component of the NURF-1 ISWI chromatin remodeling complex (also called the nucleosome-remodeling factor (NURF) complex) at least composed of SMARCA1, BPTF, RBBP4 and RBBP7. Within the complex interacts with SMARCA1. Component of the BPFT-SMARCA1 complex at least composed of SMARCA1, BPFT, RBBP4 and RBBP7; the complex is catalytically inactive and does not remodel chromatin. Within the complex interacts with SMARCA1. Interacts with BRCA1. Interacts with CDK2AP1. Interacts with CENPA. Interacts with CHD3. Interacts with CHD4. Interacts with CREBBP, and this interaction may be enhanced by the binding of phosphorylated CREB1 to CREBBP. Interacts with HDAC7. Interacts with MTA1. Interacts with PWWP2B. Interacts with RB1 (via viral protein-binding domain). Interacts with SUV39H1. Higher levels in brain, thymus, lung, spleen, kidney, testis, and ovary/uterus; lower levels in heart, liver, and muscle.

It localises to the nucleus. In terms of biological role, core histone-binding subunit that may target chromatin remodeling factors, histone acetyltransferases and histone deacetylases to their histone substrates in a manner that is regulated by nucleosomal DNA. Component of several complexes which regulate chromatin metabolism. These include the type B histone acetyltransferase (HAT) complex, which is required for chromatin assembly following DNA replication; the core histone deacetylase (HDAC) complex, which promotes histone deacetylation and consequent transcriptional repression; the nucleosome remodeling and histone deacetylase complex (the NuRD complex), which promotes transcriptional repression by histone deacetylation and nucleosome remodeling; and the PRC2/EED-EZH2 complex, which promotes repression of homeotic genes during development; and the NURF (nucleosome remodeling factor) complex. The chain is Histone-binding protein RBBP7 (Rbbp7) from Mus musculus (Mouse).